The sequence spans 369 residues: MPTPAHLSKDPHYFDFRAARRVPETHAWPGLHDHPVVDGSGAGGEPDAVPVVDMRDPFAAEAVGLAAQDWGAFLLVGHGVPLDLLVRVEAAIAGMFALPASEKMRAVRRPGDSCGYGSPPISSFFSKCMWSEGYTFSPANLRSDLRKLWPKAGHDYRHFCAVMEEFHREMRALADKLLELFLVALGLTGEQVAAVESEQKIAETMTATMHLNWYPKCPDPKRALGLIAHTDSGFFTFVLQSLVPGLQLFRHGPDRWVTVPAVPGAMVVNVGDLFQILTNGRFHSVYHRAVVNRESDRISLGYFLGPPAHVKVAPLREALAGTPAAYRAVTWPEYMGVRKKAFTTGASALKMVAISTDDAANDTDDLILS.

The region spanning 205-306 is the Fe2OG dioxygenase domain; that stretch reads MTATMHLNWY…RISLGYFLGP (102 aa). Positions 229, 231, and 287 each coordinate Fe cation. Arg297 is a catalytic residue.

The protein belongs to the iron/ascorbate-dependent oxidoreductase family. GA3OX subfamily. L-ascorbate serves as cofactor. Requires Fe cation as cofactor.

It carries out the reaction gibberellin A20 + 2-oxoglutarate + O2 = gibberellin A1 + succinate + CO2. Converts the inactive gibberellin precursors GA9 and GA20 in the bioactives gibberellins GA4 and GA1. In Triticum aestivum (Wheat), this protein is Gibberellin 3-beta-dioxygenase 2-3 (GA3ox2-3).